Reading from the N-terminus, the 339-residue chain is Lipoyl synthase (339 aa).

The disordered stretch occupies residues 13–35 (RPKLDAPARPRHPEKAHRPDTAI). Residues Cys68, Cys73, Cys79, Cys94, Cys98, Cys101, and Ser307 each contribute to the [4Fe-4S] cluster site. In terms of domain architecture, Radical SAM core spans 80 to 296 (WEKRHATFMI…ETTAYAKGFL (217 aa)).

The protein belongs to the radical SAM superfamily. Lipoyl synthase family. Requires [4Fe-4S] cluster as cofactor.

It localises to the cytoplasm. It carries out the reaction [[Fe-S] cluster scaffold protein carrying a second [4Fe-4S](2+) cluster] + N(6)-octanoyl-L-lysyl-[protein] + 2 oxidized [2Fe-2S]-[ferredoxin] + 2 S-adenosyl-L-methionine + 4 H(+) = [[Fe-S] cluster scaffold protein] + N(6)-[(R)-dihydrolipoyl]-L-lysyl-[protein] + 4 Fe(3+) + 2 hydrogen sulfide + 2 5'-deoxyadenosine + 2 L-methionine + 2 reduced [2Fe-2S]-[ferredoxin]. Its pathway is protein modification; protein lipoylation via endogenous pathway; protein N(6)-(lipoyl)lysine from octanoyl-[acyl-carrier-protein]: step 2/2. Its function is as follows. Catalyzes the radical-mediated insertion of two sulfur atoms into the C-6 and C-8 positions of the octanoyl moiety bound to the lipoyl domains of lipoate-dependent enzymes, thereby converting the octanoylated domains into lipoylated derivatives. This chain is Lipoyl synthase, found in Methylorubrum extorquens (strain CM4 / NCIMB 13688) (Methylobacterium extorquens).